The following is a 129-amino-acid chain: Urease subunit beta (129 aa).

The protein belongs to the urease beta subunit family. In terms of assembly, heterotrimer of UreA (gamma), UreB (beta) and UreC (alpha) subunits. Three heterotrimers associate to form the active enzyme.

The protein localises to the cytoplasm. It carries out the reaction urea + 2 H2O + H(+) = hydrogencarbonate + 2 NH4(+). The protein operates within nitrogen metabolism; urea degradation; CO(2) and NH(3) from urea (urease route): step 1/1. This chain is Urease subunit beta, found in Photorhabdus laumondii subsp. laumondii (strain DSM 15139 / CIP 105565 / TT01) (Photorhabdus luminescens subsp. laumondii).